The chain runs to 947 residues: Bifunctional glutamine synthetase adenylyltransferase/adenylyl-removing enzyme (947 aa).

An adenylyl removase region spans residues 1–440 (MTPLSSPLRQ…VFNELIGDDE (440 aa)). The segment at 450–947 (SEPWREVWQD…ASWRKWLVAV (498 aa)) is adenylyl transferase.

The protein belongs to the GlnE family. Requires Mg(2+) as cofactor.

The catalysed reaction is [glutamine synthetase]-O(4)-(5'-adenylyl)-L-tyrosine + phosphate = [glutamine synthetase]-L-tyrosine + ADP. The enzyme catalyses [glutamine synthetase]-L-tyrosine + ATP = [glutamine synthetase]-O(4)-(5'-adenylyl)-L-tyrosine + diphosphate. Involved in the regulation of glutamine synthetase GlnA, a key enzyme in the process to assimilate ammonia. When cellular nitrogen levels are high, the C-terminal adenylyl transferase (AT) inactivates GlnA by covalent transfer of an adenylyl group from ATP to specific tyrosine residue of GlnA, thus reducing its activity. Conversely, when nitrogen levels are low, the N-terminal adenylyl removase (AR) activates GlnA by removing the adenylyl group by phosphorolysis, increasing its activity. The regulatory region of GlnE binds the signal transduction protein PII (GlnB) which indicates the nitrogen status of the cell. The chain is Bifunctional glutamine synthetase adenylyltransferase/adenylyl-removing enzyme from Salmonella arizonae (strain ATCC BAA-731 / CDC346-86 / RSK2980).